The chain runs to 191 residues: UPF0301 protein Bphy_2327 (191 aa).

This sequence belongs to the UPF0301 (AlgH) family.

The polypeptide is UPF0301 protein Bphy_2327 (Paraburkholderia phymatum (strain DSM 17167 / CIP 108236 / LMG 21445 / STM815) (Burkholderia phymatum)).